Here is a 329-residue protein sequence, read N- to C-terminus: Protein STRICTOSIDINE SYNTHASE-LIKE 11 (329 aa).

The first 23 residues, Met-1 to Ser-23, serve as a signal peptide directing secretion. Residues Asn-37 and Asn-79 are each glycosylated (N-linked (GlcNAc...) asparagine).

This sequence belongs to the strictosidine synthase family.

It localises to the vacuole. The enzyme catalyses 3alpha(S)-strictosidine + H2O = secologanin + tryptamine. It participates in alkaloid biosynthesis; 3alpha(S)-strictosidine biosynthesis; 3alpha(S)-strictosidine from secologanin and tryptamine: step 1/1. In terms of biological role, catalyzes the stereospecific condensation of tryptamine with secologanin to form strictosidine, the key intermediate of indole alkaloid biosynthesis. The chain is Protein STRICTOSIDINE SYNTHASE-LIKE 11 from Arabidopsis thaliana (Mouse-ear cress).